A 119-amino-acid chain; its full sequence is Ribonuclease P protein component (119 aa).

Belongs to the RnpA family. Consists of a catalytic RNA component (M1 or rnpB) and a protein subunit.

The catalysed reaction is Endonucleolytic cleavage of RNA, removing 5'-extranucleotides from tRNA precursor.. Its function is as follows. RNaseP catalyzes the removal of the 5'-leader sequence from pre-tRNA to produce the mature 5'-terminus. It can also cleave other RNA substrates such as 4.5S RNA. The protein component plays an auxiliary but essential role in vivo by binding to the 5'-leader sequence and broadening the substrate specificity of the ribozyme. This is Ribonuclease P protein component from Halalkalibacterium halodurans (strain ATCC BAA-125 / DSM 18197 / FERM 7344 / JCM 9153 / C-125) (Bacillus halodurans).